The chain runs to 647 residues: Protein INVOLVED IN DE NOVO 2 (647 aa).

Disordered regions lie at residues 1-20 and 101-123; these read MGST…SESE and SASE…DCDH. Positions 9 to 20 are enriched in acidic residues; it reads SDDEDSDISESE. The stretch at 253–508 forms a coiled coil; sequence IAELTEEEAR…NIMKEWNTNI (256 aa).

In terms of assembly, interacts with FMD1/IDNL1. Forms a complex with FMD1/IDNL1 and FMD2/INDL2. Can form homodimers. Interacts with MORC6.

Its function is as follows. Forms a complex with FDM1/IDNL1 and FDM2/IDNL2 that is required for RNA-directed DNA methylation (RdDM) and that functions at a downstream step of the RdDM pathway and downstream of small interfering RNA (siRNA) formation. Required for de novo DNA methylation, siRNA accumulation and siRNA-mediated maintenance methylation. Required for several post-transcriptional gene silencing pathways. Binds double-stranded RNAs (dsRNAs) with 5'-overhangs through its XS domain. Binds long non-coding RNA (lncRNA) in an AGO4-dependent manner and associates with DRM2, resulting in DNA methylation of RdDM target loci. Mediates the silencing of a subset of MORC6 target loci. The protein is Protein INVOLVED IN DE NOVO 2 of Arabidopsis thaliana (Mouse-ear cress).